We begin with the raw amino-acid sequence, 603 residues long: MLLAVLLLLPLPSSWFAHGHPLYTRLPPSALQVLSAQGTQALQAAQRSAQWAINRVAMEIQHRSHECRGSGRPRPQALLQDPPEPGPCGERRPSTANVTRAHGRIVGGSAAPPGAWPWLVRLQLGGQPLCGGVLVAASWVLTAAHCFVGAPNELLWTVTLAEGSRGEQAEEVPVNRILPHPKFDPRTFHNDLALVQLWTPVSPGGSARPVCLPQEPQEPPAGTACAIAGWGALFEDGPEAEAVREARVPLLSTDTCRRALGPGLRPSTMLCAGYLAGGVDSCQGDSGGPLTCSEPGPRPREVLFGVTSWGDGCGEPGKPGVYTRVAVFKDWLQEQMSASSSREPSCRELLAWDPPQELQADAARLCAFYARLCPGSQGACARLAHQQCLQRRRRCELRSLAHTLLGLLRNAQELLGPRPGLRRLAPALALPAPALRESPLHPARELRLHSGSRAAGTRFPKRRPEPRGEANGCPGLEPLRQKLAALQGAHAWILQVPSEHLAMNFHEVLADLGSKTLTGLFRAWVRAGLGGRHVAFSGLVGLEPATLARSLPRLLVQALQAFRVAALAEGEPEGPWMDVGQGPGLERKGHHPLNPQVPPARQP.

The first 19 residues, 1 to 19 (MLLAVLLLLPLPSSWFAHG), serve as a signal peptide directing secretion. A disordered region spans residues 64–96 (SHECRGSGRPRPQALLQDPPEPGPCGERRPSTA). N-linked (GlcNAc...) asparagine glycosylation is present at N97. In terms of domain architecture, Peptidase S1 spans 105-337 (IVGGSAAPPG…FKDWLQEQMS (233 aa)). C130 and C146 are oxidised to a cystine. Catalysis depends on charge relay system residues H145 and D191. 3 disulfides stabilise this stretch: C225/C292, C256/C271, and C282/C313. S286 functions as the Charge relay system in the catalytic mechanism. Disordered stretches follow at residues 442–474 (PARE…NGCP) and 573–603 (EGPW…ARQP).

Belongs to the peptidase S1 family. Expressed neural retina, cornea, sclera and optic nerve.

Serine protease required during eye development. The sequence is that of Serine protease 56 (PRSS56) from Homo sapiens (Human).